A 49-amino-acid chain; its full sequence is Toxic protein HokB (49 aa).

Residues 4-24 (NPLVVCLLIICITILTFTLLT) form a helical membrane-spanning segment.

This sequence belongs to the Hok/Gef family.

The protein resides in the cell inner membrane. Toxic component of a type I toxin-antitoxin (TA) system. When overexpressed kills cells within minutes; causes collapse of the transmembrane potential and arrest of respiration. Expression leads to membrane depolarization; when protein levels are high enough depolarization probably leads to lowered metabolic activity which in turn induces some cells to enter the persistent state in which they transiently survive antibiotic exposure. Its toxic effect is probably neutralized by antisense antitoxin RNA SokB, which is encoded in trans on the opposite DNA strand. This is Toxic protein HokB from Escherichia coli (strain K12).